The chain runs to 297 residues: Protease HtpX homolog (297 aa).

The next 2 membrane-spanning stretches (helical) occupy residues 5–25 (IFLF…VLTI) and 43–63 (LMAL…ISLG). Residue His154 participates in Zn(2+) binding. Residue Glu155 is part of the active site. His158 contributes to the Zn(2+) binding site. The next 2 membrane-spanning stretches (helical) occupy residues 169 to 189 (LLQG…AWVA) and 203 to 223 (FIAM…VVFA). Glu229 serves as a coordination point for Zn(2+).

The protein belongs to the peptidase M48B family. Requires Zn(2+) as cofactor.

It is found in the cell membrane. The polypeptide is Protease HtpX homolog (Bacillus velezensis (strain DSM 23117 / BGSC 10A6 / LMG 26770 / FZB42) (Bacillus amyloliquefaciens subsp. plantarum)).